A 74-amino-acid polypeptide reads, in one-letter code: Antimicrobial peptide ToAp1 (74 aa).

An N-terminal signal peptide occupies residues 1–22; that stretch reads MQMKYLIPIFFLVLIVADHCHA. A Lysine amide modification is found at Lys39. Residues 40 to 74 constitute a propeptide that is removed on maturation; it reads GRRKRDITAQIEQYRNIQKREAAELEELLANLPVY.

Belongs to the non-disulfide-bridged peptide (NDBP) superfamily. Short antimicrobial peptide (group 4) family. In terms of tissue distribution, expressed by the venom gland.

Its subcellular location is the secreted. Its function is as follows. Antimicrobial peptide. Is able to kill Mycobacterium abscessus subsp. massiliense in a dose-dependent manner. Has antifungal activity against Candida spp. and one Cryptococcus neoformans strains with MICs values ranging from 12.5 to 200 uM. Also shows an inhibitory activity on C.albicans biofilms at high concentrations. Shows low cytotoxic activity and has weak hemolytic activity on human erythrocytes. Shows anti-inflammatory activities, since it decreases release of pro-inflammatory cytokines, and increases release of anti-inflammatory cytokines. Acts by blocking the Toll-like receptor 4 (TLR4). In addition, decreases the expression of costimulatory molecules such as CD80 and CD86 in LPS-stimulated cells. In vivo, does not induce immune cell migration. Helical wheel projections predict an amphipathic peptide with distinct hydrophobic and hydrophilic faces. The sequence is that of Antimicrobial peptide ToAp1 from Tityus obscurus (Amazonian scorpion).